Consider the following 1063-residue polypeptide: Unconventional myosin-Ic (1063 aa).

At methionine 1 the chain carries N-acetylmethionine. Threonine 10 carries the post-translational modification Phosphoserine. The Myosin motor domain maps to glycine 47–glutamate 731. ATP contacts are provided by residues asparagine 88, tyrosine 96, serine 139 to glutamate 148, and asparagine 192 to serine 196. Position 383 is an N6-methyllysine (lysine 383). Serine 408 is subject to Phosphoserine. Position 486 is an N6-acetyllysine (lysine 486). Serine 536 is subject to Phosphoserine. The actin-binding stretch occupies residues leucine 608–aspartate 630. IQ domains lie at arginine 734 to valine 757 and lysine 758 to threonine 786. 2 positions are modified to phosphoserine: serine 864 and serine 1041. Residues lysine 885–arginine 1059 form the TH1 domain.

The protein belongs to the TRAFAC class myosin-kinesin ATPase superfamily. Myosin family. In terms of assembly, interacts (via its IQ motifs) with CABP1 and CIB1; the interaction with CABP1 and CIB1 is calcium-dependent. Interacts (via tail domain) with PLEKHB1 (via PH domain); the interaction is not affected by the presence or absence of calcium and CALM. Interacts with POLR1A. Interacts with POLR2A. Component of the B-WICH complex, at least composed of SMARCA5/SNF2H, BAZ1B/WSTF, SF3B1, DEK, MYO1C, ERCC6, MYBBP1A and DDX21. Interacts (via its IQ motifs) with CALM; this precludes interaction with YWHAB. Interacts with YWHAB; this precludes interaction with CALM. Interacts with RPS6. Interacts with actin. Interacts with LLPH. Interacts with GLUT4. Interacts (via its IQ motifs) with SH3BGRL3; the interaction is dependent on calcium and takes place at membrane ruffles. In terms of processing, isoform 2 contains a N-acetylmethionine at position 1. As to expression, isoform 3 is expressed in small intestine, pancreas, brain, kidney, skin, heart muscle, testis, striated muscle, spleen, liver and lung (at protein level). Expressed in brain, testis, adrenal glands, thymus, spleen, kidney, lung, heart, cochlea and vestibule. Expressed in sensory hair cells of the inner ear. Expressed in adipocytes.

It is found in the cytoplasm. It localises to the nucleus. The protein localises to the cell cortex. Its subcellular location is the cell projection. The protein resides in the stereocilium membrane. It is found in the cytoplasmic vesicle. It localises to the ruffle membrane. The protein localises to the nucleolus. Its subcellular location is the nucleoplasm. Functionally, myosins are actin-based motor molecules with ATPase activity. Unconventional myosins serve in intracellular movements. Their highly divergent tails bind to membranous compartments, which then are moved relative to actin filaments. Involved in glucose transporter recycling in response to insulin by regulating movement of intracellular GLUT4-containing vesicles to the plasma membrane. Component of the hair cell's (the sensory cells of the inner ear) adaptation-motor complex. Acts as a mediator of adaptation of mechanoelectrical transduction in stereocilia of vestibular hair cells. Binds phosphoinositides and links the actin cytoskeleton to cellular membranes. Involved in regulation of transcription. Associated with transcriptional active ribosomal genes. Appears to cooperate with the WICH chromatin-remodeling complex to facilitate transcription. Necessary for the formation of the first phosphodiester bond during transcription initiation. The polypeptide is Unconventional myosin-Ic (Myo1c) (Mus musculus (Mouse)).